Consider the following 197-residue polypeptide: Adenylate kinase (197 aa).

19–24 (GSGKGT) is an ATP binding site. Residues 39–68 (SSGDLLRAEVQSGSPKGKELKAMMERGELV) are NMP. Residues serine 40, arginine 45, 66-68 (ELV), 95-98 (RYPR), and glutamine 102 contribute to the AMP site. An LID region spans residues 132–142 (KRAETSNRVDD). Arginine 133 is a binding site for ATP. 2 residues coordinate AMP: arginine 139 and arginine 150. Residue glycine 178 participates in ATP binding.

This sequence belongs to the adenylate kinase family. As to quaternary structure, monomer.

It is found in the cytoplasm. It carries out the reaction AMP + ATP = 2 ADP. Catalyzes the reversible transfer of the terminal phosphate group between ATP and AMP. Plays an important role in cellular energy homeostasis and in adenine nucleotide metabolism. In Schistosoma mansoni (Blood fluke), this protein is Adenylate kinase.